A 199-amino-acid chain; its full sequence is GTP cyclohydrolase 1 (199 aa).

The Zn(2+) site is built by cysteine 89, histidine 92, and cysteine 161.

The protein belongs to the GTP cyclohydrolase I family. In terms of assembly, toroid-shaped homodecamer, composed of two pentamers of five dimers.

The catalysed reaction is GTP + H2O = 7,8-dihydroneopterin 3'-triphosphate + formate + H(+). Its pathway is cofactor biosynthesis; 7,8-dihydroneopterin triphosphate biosynthesis; 7,8-dihydroneopterin triphosphate from GTP: step 1/1. The protein is GTP cyclohydrolase 1 of Bifidobacterium longum (strain NCC 2705).